Here is a 389-residue protein sequence, read N- to C-terminus: Rhizopuspepsin-1 (389 aa).

A signal peptide spans 1–21 (MKFTLISSCVALAAMTLAVEA). A propeptide spans 22-66 (APNGKKINIPLAKNNSYKPSAKNALNKALAKYNRRKVGSGGITTE) (activation peptide). In terms of domain architecture, Peptidase A1 spans 82 to 385 (YYGEVTVGTP…NQEVPEVQIA (304 aa)). Asp-100 is a catalytic residue. The cysteines at positions 113 and 116 are disulfide-linked. Asp-283 is a catalytic residue. Cys-317 and Cys-350 are oxidised to a cystine.

This sequence belongs to the peptidase A1 family.

It catalyses the reaction Hydrolysis of proteins with broad specificity similar to that of pepsin A, preferring hydrophobic residues at P1 and P1'. Clots milk and activates trypsinogen. Does not cleave 4-Gln-|-His-5, but does cleave 10-His-|-Leu-11 and 12-Val-|-Glu-13 in B chain of insulin.. The sequence is that of Rhizopuspepsin-1 (RNAP) from Rhizopus niveus.